A 423-amino-acid chain; its full sequence is Methanol:N,N-dimethyl-4-nitrosoaniline oxidoreductase (423 aa).

This sequence belongs to the iron-containing alcohol dehydrogenase family. Homodecamer. It depends on Mg(2+) as a cofactor. Requires Zn(2+) as cofactor. NADPH serves as cofactor.

It catalyses the reaction methanol + A = formaldehyde + AH2. In terms of biological role, catalyzes the oxidation of methanol to yield formaldehyde. While the in vivo electron acceptor is not known, N,N-dimethyl-4-nitrosoaniline (NDMA) can serve this function in vitro and is reduced to 4-(hydroxylamino)-N,N-dimethylaniline. It is also able to use ethanol and formaldehyde with an activity comparable to methanol, and has a weak activity with methylamine as substrate. The polypeptide is Methanol:N,N-dimethyl-4-nitrosoaniline oxidoreductase (Mycobacterium sp. (strain DSM 3803 / JC1)).